A 609-amino-acid chain; its full sequence is mRNA-decapping enzyme 1B (609 aa).

A2 is subject to N-acetylalanine. A Phosphoserine modification is found at S147. The residue at position 191 (Y191) is a Phosphotyrosine. Disordered stretches follow at residues 201-222 (PVKP…LDPE) and 243-264 (TVEP…LPIR). A compositionally biased stretch (polar residues) spans 205-219 (SENQQQRIPQPNQTL). Residues S272 and S333 each carry the phosphoserine modification. Disordered stretches follow at residues 326–345 (TGPV…GVQN) and 359–438 (TPGA…SSGV). Residues 336–345 (NIGTSRGVQN) show a composition bias toward polar residues. The span at 368–378 (PSTPAPASSAA) shows a compositional bias: low complexity. T389 carries the post-translational modification Phosphothreonine. Polar residues predominate over residues 418–438 (QSTLPRQTLPISGNQTGSSGV). Phosphoserine is present on residues S440 and S503.

It belongs to the DCP1 family. In terms of assembly, interacts with DCP1A.

Its subcellular location is the cytoplasm. The protein localises to the nucleus. It carries out the reaction a 5'-end (N(7)-methyl 5'-triphosphoguanosine)-ribonucleoside in mRNA + H2O = N(7)-methyl-GDP + a 5'-end phospho-ribonucleoside in mRNA + 2 H(+). Functionally, may play a role in the degradation of mRNAs, both in normal mRNA turnover and in nonsense-mediated mRNA decay. May remove the 7-methyl guanine cap structure from mRNA molecules, yielding a 5'-phosphorylated mRNA fragment and 7m-GDP. The sequence is that of mRNA-decapping enzyme 1B (DCP1B) from Pongo abelii (Sumatran orangutan).